A 528-amino-acid polypeptide reads, in one-letter code: Phenylalanine--tRNA ligase alpha subunit (528 aa).

Positions 365 and 444 each coordinate L-phenylalanine. Glutamate 446 is a binding site for Mg(2+). Residue phenylalanine 469 participates in L-phenylalanine binding.

It belongs to the class-II aminoacyl-tRNA synthetase family. Phe-tRNA synthetase alpha subunit type 2 subfamily. Tetramer of two alpha and two beta subunits. It depends on Mg(2+) as a cofactor.

It is found in the cytoplasm. The catalysed reaction is tRNA(Phe) + L-phenylalanine + ATP = L-phenylalanyl-tRNA(Phe) + AMP + diphosphate + H(+). This chain is Phenylalanine--tRNA ligase alpha subunit, found in Borreliella burgdorferi (strain ATCC 35210 / DSM 4680 / CIP 102532 / B31) (Borrelia burgdorferi).